We begin with the raw amino-acid sequence, 110 residues long: Replication initiation control protein YabA (110 aa).

Zn(2+)-binding residues include histidine 84, cysteine 86, cysteine 100, and cysteine 103.

It belongs to the YabA family. As to quaternary structure, homotetramer. Interacts with both DnaA and DnaN, acting as a bridge between these two proteins. The cofactor is Zn(2+).

The protein resides in the cytoplasm. The protein localises to the nucleoid. Functionally, involved in control of chromosome replication initiation. Inhibits the cooperative binding of DnaA to the oriC region, thus negatively regulating initiation of chromosome replication. Inhibits the ability of DnaA-ATP to form a helix on DNA; does not disassemble preformed DnaA-DNA helices. Decreases the residence time of DnaA on the chromosome at its binding sites (oriC, replication forks and promoter-binding sites). Tethers DnaA to the replication machinery via the DNA polymerase beta sliding clamp subunit (dnaN). Associates with oriC and other DnaA targets on the chromosome in a DnaA-dependent manner. The protein is Replication initiation control protein YabA of Streptococcus mutans serotype c (strain ATCC 700610 / UA159).